A 55-amino-acid chain; its full sequence is MADKKEGGVHRFYKIEDGKTVKLRHICSRCGKGFFMAQHKDRRSCGKCGLTEFNQ.

Zn(2+) is bound by residues Cys-27, Cys-30, Cys-45, and Cys-48. Residues 27-48 (CSRCGKGFFMAQHKDRRSCGKC) form a C4-type zinc finger.

It belongs to the eukaryotic ribosomal protein eS31 family. As to quaternary structure, part of the 30S ribosomal subunit. Zn(2+) is required as a cofactor.

This chain is Small ribosomal subunit protein eS31, found in Cenarchaeum symbiosum (strain A).